The sequence spans 98 residues: VQ motif-containing protein 1 (98 aa).

Positions 27–36 match the VQ motif; the sequence is FKTIVQELTG.

In terms of assembly, interacts with WRKY33.

The protein resides in the nucleus. Its function is as follows. May modulate WRKY transcription factor activities. The chain is VQ motif-containing protein 1 from Arabidopsis thaliana (Mouse-ear cress).